The chain runs to 485 residues: Glutamyl-tRNA(Gln) amidotransferase subunit A (485 aa).

Active-site charge relay system residues include Lys79 and Ser154. The active-site Acyl-ester intermediate is the Ser178.

It belongs to the amidase family. GatA subfamily. Heterotrimer of A, B and C subunits.

It carries out the reaction L-glutamyl-tRNA(Gln) + L-glutamine + ATP + H2O = L-glutaminyl-tRNA(Gln) + L-glutamate + ADP + phosphate + H(+). Functionally, allows the formation of correctly charged Gln-tRNA(Gln) through the transamidation of misacylated Glu-tRNA(Gln) in organisms which lack glutaminyl-tRNA synthetase. The reaction takes place in the presence of glutamine and ATP through an activated gamma-phospho-Glu-tRNA(Gln). This chain is Glutamyl-tRNA(Gln) amidotransferase subunit A, found in Bacillus licheniformis (strain ATCC 14580 / DSM 13 / JCM 2505 / CCUG 7422 / NBRC 12200 / NCIMB 9375 / NCTC 10341 / NRRL NRS-1264 / Gibson 46).